Consider the following 371-residue polypeptide: Aminomethyltransferase (371 aa).

The protein belongs to the GcvT family. The glycine cleavage system is composed of four proteins: P, T, L and H.

The catalysed reaction is N(6)-[(R)-S(8)-aminomethyldihydrolipoyl]-L-lysyl-[protein] + (6S)-5,6,7,8-tetrahydrofolate = N(6)-[(R)-dihydrolipoyl]-L-lysyl-[protein] + (6R)-5,10-methylene-5,6,7,8-tetrahydrofolate + NH4(+). In terms of biological role, the glycine cleavage system catalyzes the degradation of glycine. The protein is Aminomethyltransferase of Pectobacterium carotovorum subsp. carotovorum (strain PC1).